We begin with the raw amino-acid sequence, 213 residues long: Adenylate kinase (213 aa).

10–15 (GAGKGT) provides a ligand contact to ATP. The tract at residues 30 to 59 (AVGDIFRTIIKTSTSEAELINNYVKQGALI) is NMP. Residues R36, 57–59 (ALI), 85–88 (GYPR), and Q92 contribute to the AMP site. Residues 123–161 (GRYSCKNCGKIYNVHFLQPKTDYVCDVCSSNVFDYRRDD) are LID. Residue R124 participates in ATP binding. Residues C127 and C130 each contribute to the Zn(2+) site. Position 133 to 134 (133 to 134 (IY)) interacts with ATP. C147 and C150 together coordinate Zn(2+). Positions 158 and 169 each coordinate AMP. An ATP-binding site is contributed by K197.

Belongs to the adenylate kinase family. As to quaternary structure, monomer.

It localises to the cytoplasm. It carries out the reaction AMP + ATP = 2 ADP. The protein operates within purine metabolism; AMP biosynthesis via salvage pathway; AMP from ADP: step 1/1. Functionally, catalyzes the reversible transfer of the terminal phosphate group between ATP and AMP. Plays an important role in cellular energy homeostasis and in adenine nucleotide metabolism. In Rickettsia typhi (strain ATCC VR-144 / Wilmington), this protein is Adenylate kinase.